The chain runs to 226 residues: MPKYTDDDIFDDGAPQVAKGFDRGIDYLDIAAKLKKGLKKNYKVLQDTESTANAKRFAGSRVIYIIIALLQLKNCSRISEAIVATKKFSVSKNLNERVVVKIAKSEKDLIDRKTKDKIHTKPRYRDMVFPVDLVDTKIFKYIVKTKYWTKFCEFDSPRKRVLDFLLGHYECNTHSLRYAGINYLLNVEKRDMNVVAKFVGHANVNQLVLYTQTKALDEIFDRKIVV.

Catalysis depends on residues R97, H174, and R177. Y210 functions as the O-(3'-phospho-DNA)-tyrosine intermediate in the catalytic mechanism.

The protein belongs to the 'phage' integrase family.

May catalyze site-specific integration of viral genome into host or helper virus DNA. The chain is Putative integrase V10 from Acanthamoeba polyphaga (Amoeba).